We begin with the raw amino-acid sequence, 349 residues long: tRNA pseudouridine synthase D (349 aa).

Residue Phe-27 participates in substrate binding. The active-site Nucleophile is Asp-80. Asn-129 is a substrate binding site. Positions 155-303 (GVPNYFGAQR…VEAARRAMLL (149 aa)) constitute a TRUD domain. Substrate is bound at residue Phe-329.

This sequence belongs to the pseudouridine synthase TruD family.

It carries out the reaction uridine(13) in tRNA = pseudouridine(13) in tRNA. Responsible for synthesis of pseudouridine from uracil-13 in transfer RNAs. The sequence is that of tRNA pseudouridine synthase D from Escherichia coli O6:H1 (strain CFT073 / ATCC 700928 / UPEC).